The chain runs to 251 residues: Probable transcriptional regulatory protein NFA_37020 (251 aa).

The protein belongs to the TACO1 family.

It is found in the cytoplasm. This Nocardia farcinica (strain IFM 10152) protein is Probable transcriptional regulatory protein NFA_37020.